The chain runs to 37 residues: Large ribosomal subunit protein bL36c (37 aa).

The protein belongs to the bacterial ribosomal protein bL36 family.

The protein localises to the plastid. It localises to the chloroplast. The chain is Large ribosomal subunit protein bL36c from Lolium perenne (Perennial ryegrass).